Here is a 168-residue protein sequence, read N- to C-terminus: UPF0178 protein RBAM_023530 (168 aa).

Belongs to the UPF0178 family.

This chain is UPF0178 protein RBAM_023530, found in Bacillus velezensis (strain DSM 23117 / BGSC 10A6 / LMG 26770 / FZB42) (Bacillus amyloliquefaciens subsp. plantarum).